Here is a 150-residue protein sequence, read N- to C-terminus: uncharacterized protein (150 aa).

A signal peptide spans 1–39 (MKQRFSQVATVIFFVMSIRSPRNLGFFFTLALFVVLVCS).

This is an uncharacterized protein from Saccharomyces cerevisiae (strain ATCC 204508 / S288c) (Baker's yeast).